We begin with the raw amino-acid sequence, 161 residues long: E3 ubiquitin ligase complex SCF subunit sconC (161 aa).

Residues 102-161 form an interaction with the F-box domain of F-box proteins region; sequence ILAANYLDIKGLLDVGCKTVANMIKGKSPEEIRKTFNIQNDFTPEEEDQIRRENEWAEDR.

The protein belongs to the SKP1 family. Component of the SCF (SKP1-CUL1-F-box protein) E3 ubiquitin ligase complexes.

Its pathway is protein modification; protein ubiquitination. Essential component of the SCF (SKP1-CUL1-F-box protein) E3 ubiquitin ligase complexes, which mediate the ubiquitination and subsequent proteasomal degradation of target proteins. Controls sulfur metabolite repression, probably by mediating the inactivation or degradation of the metR transcription factor. The sequence is that of E3 ubiquitin ligase complex SCF subunit sconC (sconC) from Aspergillus flavus (strain ATCC 200026 / FGSC A1120 / IAM 13836 / NRRL 3357 / JCM 12722 / SRRC 167).